A 550-amino-acid polypeptide reads, in one-letter code: CTP synthase (550 aa).

The segment at 1–270 (MTKYVFVTGG…DRIICEELKL (270 aa)) is amidoligase domain. Ser-13 serves as a coordination point for CTP. Ser-13 lines the UTP pocket. ATP contacts are provided by residues 14-19 (SLGKGI) and Asp-71. Positions 71 and 144 each coordinate Mg(2+). CTP is bound by residues 151–153 (DIE), 191–196 (KTKPTQ), and Lys-227. UTP-binding positions include 191–196 (KTKPTQ) and Lys-227. The 253-residue stretch at 295–547 (TIGMVGKYVD…VEAALANKQA (253 aa)) folds into the Glutamine amidotransferase type-1 domain. Gly-356 provides a ligand contact to L-glutamine. Cys-383 (nucleophile; for glutamine hydrolysis) is an active-site residue. Residues 384–387 (LGMQ), Glu-407, and Arg-473 each bind L-glutamine. Residues His-520 and Glu-522 contribute to the active site.

Belongs to the CTP synthase family. In terms of assembly, homotetramer.

It carries out the reaction UTP + L-glutamine + ATP + H2O = CTP + L-glutamate + ADP + phosphate + 2 H(+). The catalysed reaction is L-glutamine + H2O = L-glutamate + NH4(+). The enzyme catalyses UTP + NH4(+) + ATP = CTP + ADP + phosphate + 2 H(+). Its pathway is pyrimidine metabolism; CTP biosynthesis via de novo pathway; CTP from UDP: step 2/2. With respect to regulation, allosterically activated by GTP, when glutamine is the substrate; GTP has no effect on the reaction when ammonia is the substrate. The allosteric effector GTP functions by stabilizing the protein conformation that binds the tetrahedral intermediate(s) formed during glutamine hydrolysis. Inhibited by the product CTP, via allosteric rather than competitive inhibition. Its function is as follows. Catalyzes the ATP-dependent amination of UTP to CTP with either L-glutamine or ammonia as the source of nitrogen. Regulates intracellular CTP levels through interactions with the four ribonucleotide triphosphates. The polypeptide is CTP synthase (Burkholderia lata (strain ATCC 17760 / DSM 23089 / LMG 22485 / NCIMB 9086 / R18194 / 383)).